We begin with the raw amino-acid sequence, 187 residues long: Small ribosomal subunit protein uS5 (187 aa).

The region spanning 21 to 84 is the S5 DRBM domain; it reads MVDKLVHINR…ESAKRDMIFV (64 aa).

Belongs to the universal ribosomal protein uS5 family. Part of the 30S ribosomal subunit. Contacts proteins S4 and S8.

In terms of biological role, with S4 and S12 plays an important role in translational accuracy. Located at the back of the 30S subunit body where it stabilizes the conformation of the head with respect to the body. This is Small ribosomal subunit protein uS5 from Mesorhizobium japonicum (strain LMG 29417 / CECT 9101 / MAFF 303099) (Mesorhizobium loti (strain MAFF 303099)).